Consider the following 264-residue polypeptide: Thymidylate synthase (264 aa).

Residue Arg-21 coordinates dUMP. Residue His-51 coordinates (6R)-5,10-methylene-5,6,7,8-tetrahydrofolate. Position 126 to 127 (126 to 127) interacts with dUMP; sequence RR. Cys-146 (nucleophile) is an active-site residue. DUMP-binding positions include 166–169, Asn-177, and 207–209; these read RSAD and HIY. Asp-169 provides a ligand contact to (6R)-5,10-methylene-5,6,7,8-tetrahydrofolate. Ala-263 is a binding site for (6R)-5,10-methylene-5,6,7,8-tetrahydrofolate.

It belongs to the thymidylate synthase family. Bacterial-type ThyA subfamily. As to quaternary structure, homodimer.

Its subcellular location is the cytoplasm. The catalysed reaction is dUMP + (6R)-5,10-methylene-5,6,7,8-tetrahydrofolate = 7,8-dihydrofolate + dTMP. The protein operates within pyrimidine metabolism; dTTP biosynthesis. Catalyzes the reductive methylation of 2'-deoxyuridine-5'-monophosphate (dUMP) to 2'-deoxythymidine-5'-monophosphate (dTMP) while utilizing 5,10-methylenetetrahydrofolate (mTHF) as the methyl donor and reductant in the reaction, yielding dihydrofolate (DHF) as a by-product. This enzymatic reaction provides an intracellular de novo source of dTMP, an essential precursor for DNA biosynthesis. This is Thymidylate synthase from Brucella abortus (strain 2308).